A 498-amino-acid chain; its full sequence is ATP synthase subunit beta, chloroplastic (498 aa).

172-179 (GGAGVGKT) contributes to the ATP binding site.

It belongs to the ATPase alpha/beta chains family. As to quaternary structure, F-type ATPases have 2 components, CF(1) - the catalytic core - and CF(0) - the membrane proton channel. CF(1) has five subunits: alpha(3), beta(3), gamma(1), delta(1), epsilon(1). CF(0) has four main subunits: a(1), b(1), b'(1) and c(9-12).

It is found in the plastid. It localises to the chloroplast thylakoid membrane. It catalyses the reaction ATP + H2O + 4 H(+)(in) = ADP + phosphate + 5 H(+)(out). Functionally, produces ATP from ADP in the presence of a proton gradient across the membrane. The catalytic sites are hosted primarily by the beta subunits. This Aspidistra elatior (Cast-iron plant) protein is ATP synthase subunit beta, chloroplastic.